The primary structure comprises 456 residues: General transcription factor IIE subunit 1 (456 aa).

The region spanning 11 to 100 is the HTH TFE/IIEalpha-type domain; the sequence is LDDLVKMVIR…LWYIDYKHII (90 aa). The segment at 129–157 adopts a C4-type zinc-finger fold; it reads CQTCHKVYTALDIPKLLNMDTGALACEIC. The tract at residues 345–402 is disordered; sequence ESAPDSGDADGNGSNSGSGGSTIEGNDGGNGEHQNKKMKLDDSQTVSSMSQSDDDGKD. The segment covering 347–357 has biased composition (low complexity); the sequence is APDSGDADGNG. The span at 358-375 shows a compositional bias: gly residues; that stretch reads SNSGSGGSTIEGNDGGNG. Over residues 377–386 the composition is skewed to basic and acidic residues; sequence HQNKKMKLDD.

It belongs to the TFIIE alpha subunit family. As to quaternary structure, TFIIE is a tetramer of two alpha and two beta subunits.

It localises to the nucleus. Recruits TFIIH to the initiation complex and stimulates the RNA polymerase II C-terminal domain kinase and DNA-dependent ATPase activities of TFIIH. Both TFIIH and TFIIE are required for promoter clearance by RNA polymerase. In Dictyostelium discoideum (Social amoeba), this protein is General transcription factor IIE subunit 1 (gtf2e1-1).